Consider the following 528-residue polypeptide: ADP,ATP carrier protein 1 (528 aa).

Transmembrane regions (helical) follow at residues 24–44 (LKKV…YTIL), 63–83 (IPFI…LIYA), 93–113 (ALFF…PVVI), 124–144 (AFAD…IAML), 149–169 (FAVF…LMFW), 184–204 (FYAL…PAII), 220–240 (WGVS…IIAA), 284–304 (YMLL…LVEV), 327–347 (FSFW…GNVI), 356–376 (ALVT…LVIF), 381–401 (TGLV…VGAI), and 463–483 (IGAM…VWLT).

This sequence belongs to the ADP/ATP translocase tlc family.

The protein resides in the cell membrane. The chain is ADP,ATP carrier protein 1 (tlcA) from Chlamydia trachomatis serovar D (strain ATCC VR-885 / DSM 19411 / UW-3/Cx).